A 332-amino-acid chain; its full sequence is Glycerol-3-phosphate dehydrogenase [NAD(P)+] (332 aa).

3 residues coordinate NADPH: Trp15, Arg35, and Lys108. Positions 108, 137, and 139 each coordinate sn-glycerol 3-phosphate. Ala141 is an NADPH binding site. Sn-glycerol 3-phosphate-binding residues include Lys192, Asp245, Ser255, Arg256, and Asn257. Lys192 serves as the catalytic Proton acceptor. An NADPH-binding site is contributed by Arg256. Residues Leu278 and Glu280 each contribute to the NADPH site.

Belongs to the NAD-dependent glycerol-3-phosphate dehydrogenase family.

The protein resides in the cytoplasm. It carries out the reaction sn-glycerol 3-phosphate + NAD(+) = dihydroxyacetone phosphate + NADH + H(+). It catalyses the reaction sn-glycerol 3-phosphate + NADP(+) = dihydroxyacetone phosphate + NADPH + H(+). The protein operates within membrane lipid metabolism; glycerophospholipid metabolism. In terms of biological role, catalyzes the reduction of the glycolytic intermediate dihydroxyacetone phosphate (DHAP) to sn-glycerol 3-phosphate (G3P), the key precursor for phospholipid synthesis. The protein is Glycerol-3-phosphate dehydrogenase [NAD(P)+] of Methylobacterium radiotolerans (strain ATCC 27329 / DSM 1819 / JCM 2831 / NBRC 15690 / NCIMB 10815 / 0-1).